Consider the following 159-residue polypeptide: Serine-protein kinase RsbW (159 aa).

Belongs to the anti-sigma-factor family.

It carries out the reaction L-seryl-[protein] + ATP = O-phospho-L-seryl-[protein] + ADP + H(+). The catalysed reaction is L-threonyl-[protein] + ATP = O-phospho-L-threonyl-[protein] + ADP + H(+). Functionally, negative regulator of sigma-B activity. Phosphorylates and inactivates its specific antagonist protein, RsbV. Upon phosphorylation of RsbV, RsbW is released and binds to sigma-B, thereby blocking its ability to form an RNA polymerase holoenzyme (E-sigma-B). The polypeptide is Serine-protein kinase RsbW (Staphylococcus aureus (strain MSSA476)).